The primary structure comprises 417 residues: Probable secreted aspartic protease ARB_07536 (417 aa).

The signal sequence occupies residues 1–20; that stretch reads MRGILILVALGAATIPQASA. A Peptidase A1 domain is found at 42–413; it reads NTDLVTIGTP…DFEKNRVGLA (372 aa). 6 N-linked (GlcNAc...) asparagine glycosylation sites follow: Asn74, Asn91, Asn100, Asn170, Asn276, and Asn314. A disulfide bond links Cys333 and Cys373.

It belongs to the peptidase A1 family.

It localises to the secreted. Probable secreted aspartic protease that supplies the fungus with nutrient amino acids. May be able to degrade the selected host's proteins involved in the immune defense. In Arthroderma benhamiae (strain ATCC MYA-4681 / CBS 112371) (Trichophyton mentagrophytes), this protein is Probable secreted aspartic protease ARB_07536.